A 395-amino-acid polypeptide reads, in one-letter code: uncharacterized protein (395 aa).

This sequence belongs to the UDP-glycosyltransferase family.

This is an uncharacterized protein from Bacillus subtilis (strain 168).